An 815-amino-acid polypeptide reads, in one-letter code: Serotype-specific mannosyltransferase WbdA (815 aa).

The interval 1 to 374 is alpha-(1-&gt;2)-mannosyltransferase; that stretch reads MSRAIIENAG…WANTAHLAID (374 aa). The alpha-(1-&gt;3)-mannosyltransferase stretch occupies residues 431–804; it reads KLLVDISVLA…WKQSAELLLK (374 aa).

This sequence belongs to the glycosyltransferase group 1 family. Glycosyltransferase 4 subfamily.

It localises to the cell inner membrane. Its pathway is bacterial outer membrane biogenesis; LPS O-antigen biosynthesis. In terms of biological role, mannosyltransferase involved in the biosynthesis of the repeat unit of the lipopolysaccharide (LPS) O-antigen region. The protein is Serotype-specific mannosyltransferase WbdA of Escherichia coli.